The primary structure comprises 367 residues: Putrescine/agmatine-binding protein (367 aa).

The first 19 residues, 1 to 19 (MKKVCALALSILTTIGATA), serve as a signal peptide directing secretion.

Belongs to the bacterial solute-binding protein 1 family.

Its subcellular location is the periplasm. In terms of biological role, binds putrescine and agmatine. The sequence is that of Putrescine/agmatine-binding protein from Pseudomonas aeruginosa (strain ATCC 15692 / DSM 22644 / CIP 104116 / JCM 14847 / LMG 12228 / 1C / PRS 101 / PAO1).